We begin with the raw amino-acid sequence, 333 residues long: Adenosine deaminase (333 aa).

Histidine 12 and histidine 14 together coordinate Zn(2+). Substrate contacts are provided by histidine 14, aspartate 16, and glycine 170. Histidine 197 provides a ligand contact to Zn(2+). The Proton donor role is filled by glutamate 200. Aspartate 278 contacts Zn(2+). Aspartate 279 is a binding site for substrate.

It belongs to the metallo-dependent hydrolases superfamily. Adenosine and AMP deaminases family. Adenosine deaminase subfamily. It depends on Zn(2+) as a cofactor.

The enzyme catalyses adenosine + H2O + H(+) = inosine + NH4(+). It carries out the reaction 2'-deoxyadenosine + H2O + H(+) = 2'-deoxyinosine + NH4(+). In terms of biological role, catalyzes the hydrolytic deamination of adenosine and 2-deoxyadenosine. The protein is Adenosine deaminase of Escherichia coli (strain SMS-3-5 / SECEC).